A 358-amino-acid polypeptide reads, in one-letter code: Glutamine synthetase (358 aa).

Residues 26 to 105 (ILAEYIWIDG…VLAECWNADG (80 aa)) form the GS beta-grasp domain. The GS catalytic domain maps to 112 to 358 (HRHECAKIME…IMMETICGGI (247 aa)).

It belongs to the glutamine synthetase family. In terms of assembly, homooctamer.

The protein resides in the cytoplasm. The catalysed reaction is L-glutamate + NH4(+) + ATP = L-glutamine + ADP + phosphate + H(+). The chain is Glutamine synthetase (GLN1) from Tuber borchii (White truffle).